The chain runs to 281 residues: Fructose-bisphosphate aldolase class 1 (281 aa).

K191 acts as the Schiff-base intermediate with dihydroxyacetone-P in catalysis.

This sequence belongs to the DeoC/FbaB aldolase family. In terms of assembly, homooctamer.

It is found in the cytoplasm. The enzyme catalyses beta-D-fructose 1,6-bisphosphate = D-glyceraldehyde 3-phosphate + dihydroxyacetone phosphate. Its activity is regulated as follows. Activated by citrate. The polypeptide is Fructose-bisphosphate aldolase class 1 (fba) (Pyrococcus abyssi (strain GE5 / Orsay)).